The sequence spans 50 residues: Disintegrin pyramidin-A (50 aa).

The 47-residue stretch at 1–47 (DCASGPCCRDCKFLKEGTICKRARGDNMDDYCNGKTCDCPRNPHKGE) folds into the Disintegrin domain. Cystine bridges form between cysteine 2/cysteine 11, cysteine 7/cysteine 32, cysteine 8/cysteine 37, and cysteine 20/cysteine 39. The Cell attachment site signature appears at 24–26 (RGD).

This sequence belongs to the venom metalloproteinase (M12B) family. P-II subfamily. P-IIa sub-subfamily. As to quaternary structure, monomer (disintegrin). In terms of tissue distribution, expressed by the venom gland.

The protein resides in the secreted. Functionally, inhibits ADP-induced human platelet aggregation. This chain is Disintegrin pyramidin-A, found in Echis pyramidum leakeyi (Leakey's carpet viper).